Consider the following 168-residue polypeptide: MRSWSPYALLVVAAIALDQWIKHLVETGLPFQEKLDLVPFLALFRTYNTGIAFSMFSSFGDTGLVVIAVLVVAFVLYLATRTPSGHVIARTGFALIIGGALGNLIDRAVYGHVIDYILFHTPVWSFAIFNLADAFISVGAALVVFDELIGWRREPSNAKPSKAKPSKD.

The next 4 helical transmembrane spans lie at 5–25 (SPYA…KHLV), 37–57 (LVPF…SMFS), 59–79 (FGDT…LYLA), and 85–105 (GHVI…GNLI). Active-site residues include Asp-115 and Asp-133. Residues 125-145 (SFAIFNLADAFISVGAALVVF) form a helical membrane-spanning segment.

It belongs to the peptidase A8 family.

It localises to the cell inner membrane. It carries out the reaction Release of signal peptides from bacterial membrane prolipoproteins. Hydrolyzes -Xaa-Yaa-Zaa-|-(S,diacylglyceryl)Cys-, in which Xaa is hydrophobic (preferably Leu), and Yaa (Ala or Ser) and Zaa (Gly or Ala) have small, neutral side chains.. The protein operates within protein modification; lipoprotein biosynthesis (signal peptide cleavage). Functionally, this protein specifically catalyzes the removal of signal peptides from prolipoproteins. The protein is Lipoprotein signal peptidase of Mesorhizobium japonicum (strain LMG 29417 / CECT 9101 / MAFF 303099) (Mesorhizobium loti (strain MAFF 303099)).